The sequence spans 583 residues: Sensor protein SrrB (583 aa).

Residues 1–11 (MMSRLNSVVIK) are Cytoplasmic-facing. A helical transmembrane segment spans residues 12–32 (LWLTIILIVTTVLILLSIALI). Residues 33-174 (TFMQYYFTQE…SIEDTNNAIT (142 aa)) are Extracellular-facing. A helical transmembrane segment spans residues 175–195 (IITIITAVIFLTITTVFAFFL). The Cytoplasmic portion of the chain corresponds to 196–583 (SSRITKPLRR…TFIIKLPKPE (388 aa)). Positions 197–249 (SRITKPLRRLRDQATRVSEGDYSYKPSVTTKDEIGQLSQAFNQMSTEIEEHVD) constitute an HAMP domain. One can recognise a Histidine kinase domain in the interval 366–583 (NVSHELRTPI…TFIIKLPKPE (218 aa)). The residue at position 369 (His-369) is a Phosphohistidine; by autocatalysis.

It localises to the cell membrane. It catalyses the reaction ATP + protein L-histidine = ADP + protein N-phospho-L-histidine.. Its function is as follows. Member of the two-component regulatory system SrrA/SrrB, which is involved in the global regulation of staphylococcal virulence factors in response to environmental oxygen levels as well as biofilm formation. Also plays an essential role in host-derived nitric oxide resistance by regulating hmp/flavohemoglobin, an enzyme that detoxifies nitric oxide by converting it to nitrate. Functions as a sensor protein kinase which is autophosphorylated at a histidine residue and transfers its phosphate group to SrrA. In turn, SrrA binds to the upstream promoter regions of the target genes to positively and negatively regulate their expression. This chain is Sensor protein SrrB (srrB), found in Staphylococcus aureus (strain MW2).